The following is a 96-amino-acid chain: Large ribosomal subunit protein uL23 (96 aa).

Belongs to the universal ribosomal protein uL23 family. As to quaternary structure, part of the 50S ribosomal subunit. Contacts protein L29, and trigger factor when it is bound to the ribosome.

Its function is as follows. One of the early assembly proteins it binds 23S rRNA. One of the proteins that surrounds the polypeptide exit tunnel on the outside of the ribosome. Forms the main docking site for trigger factor binding to the ribosome. This Alkaliphilus metalliredigens (strain QYMF) protein is Large ribosomal subunit protein uL23.